The primary structure comprises 395 residues: E3 ubiquitin-protein ligase RNFT1 (395 aa).

2 disordered regions span residues 1–58 and 78–97; these read MQAS…SSRN and YSHS…GEHG. A run of 6 helical transmembrane segments spans residues 118–138, 165–185, 193–213, 216–236, 258–278, and 283–303; these read ILIL…LGIG, CAWL…TFHS, IFLN…IVGI, FILK…PSFI, IFVP…FGNV, and LGIL…FGHL. Residues 328–379 form a required for ubiquitin ligase activity and for protection against ER stress-induced cell death region; the sequence is CSDMDGICTICQAEFQKPVLLFCQHIFCEECITLWFNREKTCPLCRTVISEC. Residues 335-373 form an RING-type zinc finger; the sequence is CTICQAEFQKPVLLFCQHIFCEECITLWFNREKTCPLCR.

As to expression, predominantly expressed in testis.

Its subcellular location is the early endosome membrane. The enzyme catalyses S-ubiquitinyl-[E2 ubiquitin-conjugating enzyme]-L-cysteine + [acceptor protein]-L-lysine = [E2 ubiquitin-conjugating enzyme]-L-cysteine + N(6)-ubiquitinyl-[acceptor protein]-L-lysine.. It participates in protein modification; protein ubiquitination. Functionally, E3 ubiquitin-protein ligase that acts in the endoplasmic reticulum (ER)-associated degradation (ERAD) pathway, which targets misfolded proteins that accumulate in the endoplasmic reticulum (ER) for ubiquitination and subsequent proteasome-mediated degradation. Protects cells from ER stress-induced apoptosis. The chain is E3 ubiquitin-protein ligase RNFT1 (Rnft1) from Mus musculus (Mouse).